The sequence spans 356 residues: MDVLRPQIVTFDGRNYRKNPIQEKQYQHEEDEDFYPDSMEYSDEPCGAYEVAQTPHGFRATVSAPSLLYKHIVGKRGDTKKKIEVETKTSINIPKHGHEGEIVITGQHRNGVVSARTRIDVLLDTFRRRQPFTHFLSFFLNEVEVQERFLMFQEEVLRKCSKDRGVDSTIFQNPKKLHLTIGMLVLLSEQEIQQTCEILQRCKEEFINDISGGRPLEVEMAGIEYMNDDPAMVDVLYAKVHMKDGSNRLQELVDRVLERFQSLGLIVKEWTSVKLHATVMNTLLRKDPNAEGRYNLYTADGKYIFKERESFDGRNILKTFENFYFGSLRLNSIHISQRFTVDSFGNYASCGHVDFS.

The segment at 1-52 (MDVLRPQIVTFDGRNYRKNPIQEKQYQHEEDEDFYPDSMEYSDEPCGAYEVA) is required for interaction with ASCC3. The KH domain occupies 57-119 (GFRATVSAPS…NGVVSARTRI (63 aa)).

In terms of assembly, identified in the ASCC complex that contains ASCC1, ASCC2 and ASCC3. Interacts directly with ASCC3. The ASCC complex interacts with ALKBH3. Part of the ASC-1 complex, that contains TRIP4, ASCC1, ASCC2 and ASCC3. Interacts with CSRP1. Interacts with ZCCHC4. Expressed in the spinal cord, brain, paraspinal ganglia, thyroid, and submandibular glands.

It is found in the nucleus. The protein resides in the nucleus speckle. Plays a role in DNA damage repair as component of the ASCC complex. Part of the ASC-1 complex that enhances NF-kappa-B, SRF and AP1 transactivation. In cells responding to gastrin-activated paracrine signals, it is involved in the induction of SERPINB2 expression by gastrin. May also play a role in the development of neuromuscular junction. In Mus musculus (Mouse), this protein is Activating signal cointegrator 1 complex subunit 1 (Ascc1).